The primary structure comprises 383 residues: Putative glutamate--cysteine ligase 2-2 (383 aa).

It belongs to the glutamate--cysteine ligase type 2 family. YbdK subfamily.

The catalysed reaction is L-cysteine + L-glutamate + ATP = gamma-L-glutamyl-L-cysteine + ADP + phosphate + H(+). Functionally, ATP-dependent carboxylate-amine ligase which exhibits weak glutamate--cysteine ligase activity. The polypeptide is Putative glutamate--cysteine ligase 2-2 (Legionella pneumophila (strain Paris)).